Reading from the N-terminus, the 593-residue chain is NADH-quinone oxidoreductase subunit C/D 1 (593 aa).

The tract at residues 1-193 (MPWAKEGDLQ…DNLEGLMNYD (193 aa)) is NADH dehydrogenase I subunit C. The segment at 217–593 (AQIVLNWGPL…IDPVVGETDR (377 aa)) is NADH dehydrogenase I subunit D.

It in the N-terminal section; belongs to the complex I 30 kDa subunit family. In the C-terminal section; belongs to the complex I 49 kDa subunit family. In terms of assembly, NDH-1 is composed of 13 different subunits. Subunits NuoB, CD, E, F, and G constitute the peripheral sector of the complex.

The protein resides in the cell inner membrane. The enzyme catalyses a quinone + NADH + 5 H(+)(in) = a quinol + NAD(+) + 4 H(+)(out). NDH-1 shuttles electrons from NADH, via FMN and iron-sulfur (Fe-S) centers, to quinones in the respiratory chain. The immediate electron acceptor for the enzyme in this species is believed to be ubiquinone. Couples the redox reaction to proton translocation (for every two electrons transferred, four hydrogen ions are translocated across the cytoplasmic membrane), and thus conserves the redox energy in a proton gradient. The sequence is that of NADH-quinone oxidoreductase subunit C/D 1 (nuoC1) from Aquifex aeolicus (strain VF5).